The sequence spans 421 residues: 3-alpha-mycarosylerythronolide B desosaminyl transferase (421 aa).

A signal peptide spans 1-23 (MRVVFSSMASKSHLFGLVPLAWA).

The protein belongs to the glycosyltransferase 28 family. In terms of assembly, heterotetramer composed of EryCII and EryCIII.

It carries out the reaction 3-O-alpha-L-mycarosylerythronolide B + dTDP-alpha-D-desosamine = erythromycin D + dTDP + H(+). It functions in the pathway antibiotic biosynthesis; erythromycin biosynthesis. Catalyzes the conversion of alpha-L-mycarosylerythronolide B into erythromycin D in the erythromycin biosynthesis pathway. The sequence is that of 3-alpha-mycarosylerythronolide B desosaminyl transferase (eryCIII) from Saccharopolyspora erythraea (strain ATCC 11635 / DSM 40517 / JCM 4748 / NBRC 13426 / NCIMB 8594 / NRRL 2338).